Reading from the N-terminus, the 552-residue chain is Probable malate:quinone oxidoreductase (552 aa).

Residues 530 to 552 (DAKPATPEAKPAQASSPQHDMAL) form a disordered region. Residues 542–552 (QASSPQHDMAL) are compositionally biased toward polar residues.

It belongs to the MQO family. It depends on FAD as a cofactor.

The enzyme catalyses (S)-malate + a quinone = a quinol + oxaloacetate. It participates in carbohydrate metabolism; tricarboxylic acid cycle; oxaloacetate from (S)-malate (quinone route): step 1/1. The chain is Probable malate:quinone oxidoreductase from Cronobacter sakazakii (strain ATCC BAA-894) (Enterobacter sakazakii).